The primary structure comprises 65 residues: MPGVRIRENEPFDLALKKFKKQCEKAGILSEVRKREHYEKPSIKRKKKAIAARKRALKKQRKMMD.

Belongs to the bacterial ribosomal protein bS21 family.

This chain is Small ribosomal subunit protein bS21, found in Trichlorobacter lovleyi (strain ATCC BAA-1151 / DSM 17278 / SZ) (Geobacter lovleyi).